Reading from the N-terminus, the 131-residue chain is uncharacterized protein (131 aa).

A CMP/dCMP-type deaminase domain is found at 1–116 (MYMARMLSEM…EMLEASSIQC (116 aa)).

This is an uncharacterized protein from Caenorhabditis elegans.